Here is an 852-residue protein sequence, read N- to C-terminus: Elongation factor 2 (852 aa).

Positions 17–356 (RNIRNMSVIA…MIAFHLPSPV (340 aa)) constitute a tr-type G domain. 26 to 33 (AHVDHGKS) contributes to the GTP binding site. 2 positions are modified to phosphothreonine: Thr-57 and Thr-59. Residues 170 to 173 (NKMD) and 227 to 229 (SGL) each bind GTP. His-709 bears the Diphthamide mark.

Belongs to the TRAFAC class translation factor GTPase superfamily. Classic translation factor GTPase family. EF-G/EF-2 subfamily. Phosphorylation by EF-2 kinase completely inactivates EF-2. In terms of processing, AMPylated by fic-1.

It localises to the cytoplasm. It carries out the reaction GTP + H2O = GDP + phosphate + H(+). Its function is as follows. Catalyzes the GTP-dependent ribosomal translocation step during translation elongation. During this step, the ribosome changes from the pre-translocational (PRE) to the post-translocational (POST) state as the newly formed A-site-bound peptidyl-tRNA and P-site-bound deacylated tRNA move to the P and E sites, respectively. Catalyzes the coordinated movement of the two tRNA molecules, the mRNA and conformational changes in the ribosome. Involved in the morphogenesis of epidermal tissues. The chain is Elongation factor 2 (eef-2) from Caenorhabditis elegans.